Consider the following 340-residue polypeptide: MVTTMKEVAERAGVSKSTVSQFLQKRYNYMSENTKKKIEQAIEDLSYIPNEVARSLKQKKTFIVGVISSTILSRFTTEVVRAIEDECQLENVQVIVCNTDDDSLKEKKYVQSMIARQVDGLIIFPTEENKKLYVSLVKNGYPFVFVDRKIDELSVDTVLLNNEKASRACVEALIEHGHNNIGIITFPLGKKAITTRSERLSGYRNTLGKHDIPVNENYIKSGRLDEMPNLIGQLFHMENPPTAIIATNDMILEQVLIYAKNNHLTIPNDFSLIGIDDVSFASFYNPPITTVSQPSFEMGKRSARLLLEKIDQKEQDHEELSEIIRMNPVINHRESVLKLN.

The HTH lacI-type domain occupies 1-58; the sequence is MVTTMKEVAERAGVSKSTVSQFLQKRYNYMSENTKKKIEQAIEDLSYIPNEVARSLKQ. Residues 5–24 constitute a DNA-binding region (H-T-H motif); it reads MKEVAERAGVSKSTVSQFLQ.

Its function is as follows. Putative repressor of the endoglucanase operon. The chain is Probable HTH-type transcriptional regulator EndR (endR) from Paenibacillus polymyxa (Bacillus polymyxa).